The sequence spans 254 residues: Nickel import ATP-binding protein NikO (254 aa).

The ABC transporter domain occupies 5-246; that stretch reads FELQGVQFAY…TALLRRARLL (242 aa). 37-44 provides a ligand contact to ATP; it reads GANGSGKS.

It belongs to the ABC transporter superfamily. As to quaternary structure, forms an energy-coupling factor (ECF) transporter complex composed of an ATP-binding protein (A component, NikO), a transmembrane protein (T component, NikQ) and a fused possible substrate-capture protein (S component, NikMN) of unknown stoichimetry.

The protein localises to the cell inner membrane. The catalysed reaction is Ni(2+)(out) + ATP + H2O = Ni(2+)(in) + ADP + phosphate + H(+). In terms of biological role, part of the energy-coupling factor (ECF) transporter complex NikMNQO involved in nickel import. The complex confers nickel uptake upon expression in E.coli. Shows very low activity with cobalt. Presumably responsible for energy coupling to the transport system. This is Nickel import ATP-binding protein NikO from Rhodobacter capsulatus (strain ATCC BAA-309 / NBRC 16581 / SB1003).